The following is a 212-amino-acid chain: Anaphase-promoting complex subunit 10 (212 aa).

Residues 12–196 (MDEEERTSSR…PSAVLEARPG (185 aa)) form the DOC domain.

The protein belongs to the APC10 family. The APC/C complex is probably composed of at least 12 subunits: apc-2, apc-10, apc-11, cdc-26, emb-1, emb-27, emb-30, mat-1, mat-2, mat-3, such-1 and gfi-3.

Its pathway is protein modification; protein ubiquitination. Functionally, probable component of the anaphase promoting complex/cyclosome (APC/C), a cell cycle-regulated E3 ubiquitin ligase that controls progression through mitosis and the G1 phase of the cell cycle. The APC/C complex acts by mediating ubiquitination and subsequent degradation of target proteins. This Caenorhabditis elegans protein is Anaphase-promoting complex subunit 10.